Consider the following 683-residue polypeptide: Protein distal antenna (683 aa).

An HTH psq-type domain is found at 7–58; that stretch reads TKGKRPLRSLTPRDKIHAIQRIHDGESKASVARDIGVPESTLRGWCKNEDKL. Residues 34-54 constitute a DNA-binding region (H-T-H motif); that stretch reads KASVARDIGVPESTLRGWCKN. Disordered stretches follow at residues 220 to 255, 336 to 369, 443 to 525, 572 to 597, and 652 to 683; these read TANNLRNSKPSVQPPLQVQSPRSDSGDRTPGLSVKN, SPPIRSSTPQHIIQHAQTPPLPSAPLTPSSTPSG, SETP…SDCI, NQHSNNNDISASNNNNNNSNKTDEEE, and EPQVTEKPNKDLLENEENTEEDSCRNKIRRRK. Residues 227-242 are compositionally biased toward low complexity; sequence SKPSVQPPLQVQSPRS. Polar residues-rich tracts occupy residues 338 to 352 and 445 to 460; these read PIRSSTPQHIIQHAQ and TPSVRSLSSNEHNQLD. Residues 462–478 show a composition bias toward acidic residues; sequence IEGDEVTDPDLDAEIEG. The segment covering 575-591 has biased composition (low complexity); sequence SNNNDISASNNNNNNSN.

As to quaternary structure, homomers. Interacts with itself, danr, ey and dac to form a complex (or complexes) containing the RD factors.

It localises to the nucleus. Probable transcription factor with a role in the retinal determination (RD) network. Regulates ato expression and is required for normal R8 induction and differentiation. Danr appears to repress Dan expression, but Dan is required for Danr expression anterior to the morphogenetic furrow (MF). Dan and Danr lie downstream of so and require dac function for highest levels of expression. Contributes to differentiation of antenna-specific characteristics; effector gene that acts downstream of homothorax (hth), Distal-less (Dll), cut (ct) and spineless (ss) genes to control differentiation of distal antennal structures. The protein is Protein distal antenna of Drosophila pseudoobscura pseudoobscura (Fruit fly).